Here is a 463-residue protein sequence, read N- to C-terminus: Argininosuccinate lyase (463 aa).

It belongs to the lyase 1 family. Argininosuccinate lyase subfamily.

It localises to the cytoplasm. It carries out the reaction 2-(N(omega)-L-arginino)succinate = fumarate + L-arginine. The protein operates within amino-acid biosynthesis; L-arginine biosynthesis; L-arginine from L-ornithine and carbamoyl phosphate: step 3/3. In Bradyrhizobium sp. (strain BTAi1 / ATCC BAA-1182), this protein is Argininosuccinate lyase.